Consider the following 357-residue polypeptide: UDP-N-acetylglucosamine--N-acetylmuramyl-(pentapeptide) pyrophosphoryl-undecaprenol N-acetylglucosamine transferase (357 aa).

UDP-N-acetyl-alpha-D-glucosamine contacts are provided by residues 11-13 (TGG), Asn120, Arg161, Ser188, and Gln281.

The protein belongs to the glycosyltransferase 28 family. MurG subfamily.

It is found in the cell inner membrane. The catalysed reaction is di-trans,octa-cis-undecaprenyl diphospho-N-acetyl-alpha-D-muramoyl-L-alanyl-D-glutamyl-meso-2,6-diaminopimeloyl-D-alanyl-D-alanine + UDP-N-acetyl-alpha-D-glucosamine = di-trans,octa-cis-undecaprenyl diphospho-[N-acetyl-alpha-D-glucosaminyl-(1-&gt;4)]-N-acetyl-alpha-D-muramoyl-L-alanyl-D-glutamyl-meso-2,6-diaminopimeloyl-D-alanyl-D-alanine + UDP + H(+). It functions in the pathway cell wall biogenesis; peptidoglycan biosynthesis. Its function is as follows. Cell wall formation. Catalyzes the transfer of a GlcNAc subunit on undecaprenyl-pyrophosphoryl-MurNAc-pentapeptide (lipid intermediate I) to form undecaprenyl-pyrophosphoryl-MurNAc-(pentapeptide)GlcNAc (lipid intermediate II). The protein is UDP-N-acetylglucosamine--N-acetylmuramyl-(pentapeptide) pyrophosphoryl-undecaprenol N-acetylglucosamine transferase of Prochlorococcus marinus (strain SARG / CCMP1375 / SS120).